The sequence spans 199 residues: Chaperone protein TorD (199 aa).

The protein belongs to the TorD/DmsD family. TorD subfamily.

It localises to the cytoplasm. Functionally, involved in the biogenesis of TorA. Acts on TorA before the insertion of the molybdenum cofactor and, as a result, probably favors a conformation of the apoenzyme that is competent for acquiring the cofactor. The chain is Chaperone protein TorD from Escherichia coli O7:K1 (strain IAI39 / ExPEC).